The primary structure comprises 738 residues: Outer membrane protein assembly factor BamA (738 aa).

An N-terminal signal peptide occupies residues 1-13 (MVWLLFLSSFCFA). POTRA domains lie at 14 to 81 (DEVV…LQEN), 82 to 159 (PILR…VKEA), 162 to 248 (TVIR…LKEG), 251 to 329 (YSFG…VVST), and 332 to 404 (YRIR…VKER).

The protein belongs to the BamA family. In terms of assembly, part of the Bam complex.

Its subcellular location is the cell outer membrane. Functionally, part of the outer membrane protein assembly complex, which is involved in assembly and insertion of beta-barrel proteins into the outer membrane. This is Outer membrane protein assembly factor BamA from Neorickettsia risticii (strain Illinois).